The chain runs to 124 residues: MARLSGVDLPREKRMEIALTYIYGIGRTRSKEILDATGVSPDLRSKDLSDEDLAKLREYIEESLKVEGDLRREVQADIRRKIEIGCYQGLRHRRGLPVRGQRTKTNARTRKGPKRTIAGKKKAK.

The tract at residues 95–124 (GLPVRGQRTKTNARTRKGPKRTIAGKKKAK) is disordered.

Belongs to the universal ribosomal protein uS13 family. As to quaternary structure, part of the 30S ribosomal subunit. Forms a loose heterodimer with protein S19. Forms two bridges to the 50S subunit in the 70S ribosome.

In terms of biological role, located at the top of the head of the 30S subunit, it contacts several helices of the 16S rRNA. In the 70S ribosome it contacts the 23S rRNA (bridge B1a) and protein L5 of the 50S subunit (bridge B1b), connecting the 2 subunits; these bridges are implicated in subunit movement. Contacts the tRNAs in the A and P-sites. The chain is Small ribosomal subunit protein uS13 from Rhodococcus erythropolis (strain PR4 / NBRC 100887).